Here is a 64-residue protein sequence, read N- to C-terminus: Prokaryotic ubiquitin-like protein Pup (64 aa).

Over residues 1–11 (MAQEQTKRGGG) the composition is skewed to basic and acidic residues. The tract at residues 1 to 36 (MAQEQTKRGGGGDDDDVTDLGGPAGQERREKLAEDT) is disordered. Positions 21–58 (GGPAGQERREKLAEDTDDLLDEIDDVLEENAEDFVRAY) are ARC ATPase binding. Positions 24 to 52 (AGQERREKLAEDTDDLLDEIDDVLEENAE) form a coiled coil. Position 64 is a deamidated glutamine (Gln64). Gln64 is covalently cross-linked (Isoglutamyl lysine isopeptide (Gln-Lys) (interchain with K-? in acceptor proteins)).

The protein belongs to the prokaryotic ubiquitin-like protein family. Strongly interacts with the proteasome-associated ATPase ARC through a hydrophobic interface; the interacting region of Pup lies in its C-terminal half. There is one Pup binding site per ARC hexamer ring. Is modified by deamidation of its C-terminal glutamine to glutamate by the deamidase Dop, a prerequisite to the subsequent pupylation process.

It functions in the pathway protein degradation; proteasomal Pup-dependent pathway. Functionally, protein modifier that is covalently attached to lysine residues of substrate proteins, thereby targeting them for proteasomal degradation. The tagging system is termed pupylation. This chain is Prokaryotic ubiquitin-like protein Pup, found in Mycobacteroides abscessus (strain ATCC 19977 / DSM 44196 / CCUG 20993 / CIP 104536 / JCM 13569 / NCTC 13031 / TMC 1543 / L948) (Mycobacterium abscessus).